The primary structure comprises 402 residues: UDP-glucose 6-dehydrogenase (402 aa).

NAD(+) is bound by residues 2-19, V11, D29, K34, T83, T118, and E145; that span reads KIAVAGSGYVGLSLGVLL. Substrate is bound by residues 141-145, K204, N208, 249-253, and G257; these read EFLRE and YNNPS. NAD(+) is bound at residue Y259. C260 functions as the Nucleophile in the catalytic mechanism. K263 serves as a coordination point for NAD(+). K320 contacts substrate. R327 contributes to the NAD(+) binding site.

This sequence belongs to the UDP-glucose/GDP-mannose dehydrogenase family.

The enzyme catalyses UDP-alpha-D-glucose + 2 NAD(+) + H2O = UDP-alpha-D-glucuronate + 2 NADH + 3 H(+). It participates in nucleotide-sugar biosynthesis; UDP-alpha-D-glucuronate biosynthesis; UDP-alpha-D-glucuronate from UDP-alpha-D-glucose: step 1/1. In terms of biological role, catalyzes the formation of UDP-glucuronic acid which is required for capsular hyaluronic acid synthesis. The polypeptide is UDP-glucose 6-dehydrogenase (hasB) (Streptococcus pyogenes serotype M3 (strain ATCC BAA-595 / MGAS315)).